The following is a 113-amino-acid chain: Dynein light chain Tctex-type 1 (113 aa).

Residue M1 is modified to N-acetylmethionine. The interval 41–113 (QWTTNVVEQT…CIVSAFGLSI (73 aa)) is interaction with GNB1.

It belongs to the dynein light chain Tctex-type family. In terms of assembly, homodimer. The cytoplasmic dynein 1 complex consists of two catalytic heavy chains (HCs) and a number of non-catalytic subunits presented by intermediate chains (ICs), light intermediate chains (LICs) and light chains (LCs); the composition seems to vary in respect to the IC, LIC and LC composition. The heavy chain homodimer serves as a scaffold for the probable homodimeric assembly of the non-catalytic subunits. The ICs and LICs bind directly to the HC dimer and the LCs assemble on the IC dimer. DYNLT1 and DYNLT3 compete for association with dynein IC (DYNC1I1 or DYNC1I2). Self-associates. Interacts with RHO. Interacts with DYNC1I1 and DYNC1I2. Interacts with DOC2A, DOC2B and SCN10A. Interacts with PVR. Interacts with SVIL isoform 2. Interacts with GNB1; the interaction occurs in presence of guanine nucleotide-binding protein G(T) subunit gamma; the interaction diminishes the association of DYNLT1 with dynein IC (DYNC1I1 or DYNC1I2). Interacts with GNB2, GNB3 and GNB5; the interactions occur in presence of guanine nucleotide-binding protein G(T) subunit gamma. Interacts with ACVR2B and ARHGEF2. Interacts with DNAI4. Interacts with CFAP61. Post-translationally, phosphorylated by BMPR2. The phosphorylation status is proposed to regulate the association with the cytoplasmic dynein complex and may have role in cytoplasmic dynein cargo release.

It is found in the golgi apparatus. The protein resides in the cytoplasm. It localises to the cytoskeleton. Its subcellular location is the spindle. In terms of biological role, acts as one of several non-catalytic accessory components of the cytoplasmic dynein 1 complex that are thought to be involved in linking dynein to cargos and to adapter proteins that regulate dynein function. Cytoplasmic dynein 1 acts as a motor for the intracellular retrograde motility of vesicles and organelles along microtubules. Binds to transport cargos and is involved in apical cargo transport such as rhodopsin-bearing vesicles in polarized epithelia. May also be a accessory component of axonemal dynein. Functionally, plays a role in neuronal morphogenesis; the function is independent of cytoplasmic dynein and seems to be coupled to regulation of the actin cytoskeleton by enhancing Rac1 activity. The function in neurogenesis may be regulated by association with a G-protein beta-gamma dimer. May function as a receptor-independent activator of heterotrimeric G-protein signaling; the activation appears to be independent of a nucleotide exchange. Plays a role in regulating neurogenesis; inhibits the genesis of neurons from precursor cells during cortical development presumably by antagonizing ARHGEF2. Involved in the regulation of mitotic spindle orientation. Unrelated to the role in retrograde microtubule-associated movement may play a role in the dimerization of cytoplasmic proteins/domains such as for ACVR2B. Binds to the cytoplasmic domain of ACVR2B and, in vitro, inhibits ACVR2B signaling. The chain is Dynein light chain Tctex-type 1 (DYNLT1) from Bos taurus (Bovine).